The chain runs to 125 residues: MPRTARGIYHNLKESEYVVSNGDATFFFFSEMYQNKFLDGYQKHREEFNKKINRITDTPLNMDMLADITFYSNVEKRGFHAWLKGVNTTWQEIHVYALRTMTKPCTQNWSRIRKPKLVERRKSMV.

A DNA-binding region (H-T-H motif) is located at residues 77–96 (RGFHAWLKGVNTTWQEIHVY).

The protein belongs to the podoviruses GP4 family.

This protein is believed to be a positive regulator of late transcription. It may function as a sigma-like component of the host RNA polymerase. Binds to a region of the A3 promoter located between nucleotides -50 and -100 relative to the transcription start site, that presents a sequence-directed curvature. Full induction of this curvature is needed for the transcription activation process. The sequence is that of Late genes activator (4) from Bacillus subtilis (Bacteriophage Nf).